Here is a 304-residue protein sequence, read N- to C-terminus: Glutaminase (304 aa).

Substrate-binding residues include Ser-63, Asn-114, Glu-158, Asn-165, Tyr-189, Tyr-240, and Val-258.

The protein belongs to the glutaminase family. As to quaternary structure, homotetramer.

It catalyses the reaction L-glutamine + H2O = L-glutamate + NH4(+). This chain is Glutaminase, found in Shewanella oneidensis (strain ATCC 700550 / JCM 31522 / CIP 106686 / LMG 19005 / NCIMB 14063 / MR-1).